Here is a 432-residue protein sequence, read N- to C-terminus: Maltoporin (432 aa).

Residues methionine 1 to alanine 22 form the signal peptide.

Belongs to the porin LamB (TC 1.B.3) family. Homotrimer formed of three 18-stranded antiparallel beta-barrels, containing three independent channels.

The protein localises to the cell outer membrane. The enzyme catalyses beta-maltose(in) = beta-maltose(out). In terms of biological role, involved in the transport of maltose and maltodextrins. This Vibrio parahaemolyticus serotype O3:K6 (strain RIMD 2210633) protein is Maltoporin.